A 92-amino-acid polypeptide reads, in one-letter code: MSAEVALVYRVLPESVEVDIEKLKTSVINKLSPKYKVDRVEVEEIGFGIKALRFFIRMPESDEYSSDEVEELLRSVEGVGGYELEYFSRLSF.

It belongs to the EF-1-beta/EF-1-delta family.

Its function is as follows. Promotes the exchange of GDP for GTP in EF-1-alpha/GDP, thus allowing the regeneration of EF-1-alpha/GTP that could then be used to form the ternary complex EF-1-alpha/GTP/AAtRNA. The polypeptide is Elongation factor 1-beta (Pyrobaculum neutrophilum (strain DSM 2338 / JCM 9278 / NBRC 100436 / V24Sta) (Thermoproteus neutrophilus)).